Consider the following 420-residue polypeptide: Glyceraldehyde-3-phosphate dehydrogenase GAPCP2, chloroplastic (420 aa).

The N-terminal 66 residues, 1 to 66, are a transit peptide targeting the chloroplast; the sequence is MALSSLLRSA…YNAKRVQPIK (66 aa). Residues 94–95, aspartate 116, and arginine 162 contribute to the NAD(+) site; that span reads RI. D-glyceraldehyde 3-phosphate-binding positions include 233 to 235, threonine 264, 293 to 294, and arginine 316; these read SCT and TG. Residue cysteine 234 is the Nucleophile of the active site. Asparagine 398 serves as a coordination point for NAD(+).

This sequence belongs to the glyceraldehyde-3-phosphate dehydrogenase family. Homotetramer. In terms of tissue distribution, expressed in shoot and root vasculature, leaf veins and vascular tissue of flowers and siliques.

It localises to the plastid. Its subcellular location is the chloroplast stroma. The enzyme catalyses D-glyceraldehyde 3-phosphate + phosphate + NAD(+) = (2R)-3-phospho-glyceroyl phosphate + NADH + H(+). In terms of biological role, involved in plastidial glycolytic pathway and plays a specific role in glycolytic energy production in non-green plastids and chloroplasts. Essential for breakdown of starch to form sucrose for export to non-photosynthetic tissues, and to generate primary metabolites for anabolic pathways such as fatty acid and amino acid synthesis. Plays an important role in plant development by providing substrates for the phosphorylated pathway of serine biosynthesis in roots. Plays a crucial role in pollen development. Functionally redundant with GAPCP1. This Arabidopsis thaliana (Mouse-ear cress) protein is Glyceraldehyde-3-phosphate dehydrogenase GAPCP2, chloroplastic (GAPCP2).